An 88-amino-acid polypeptide reads, in one-letter code: ATP synthase subunit c (88 aa).

The next 2 membrane-spanning stretches (helical) occupy residues 10 to 30 (ILAASAIGAGLAMIAGLGPGI) and 68 to 88 (GIYSLVIALILLFANPLIRLL).

Belongs to the ATPase C chain family. As to quaternary structure, F-type ATPases have 2 components, F(1) - the catalytic core - and F(0) - the membrane proton channel. F(1) has five subunits: alpha(3), beta(3), gamma(1), delta(1), epsilon(1). F(0) has three main subunits: a(1), b(2) and c(10-14). The alpha and beta chains form an alternating ring which encloses part of the gamma chain. F(1) is attached to F(0) by a central stalk formed by the gamma and epsilon chains, while a peripheral stalk is formed by the delta and b chains.

The protein localises to the cell membrane. Its function is as follows. F(1)F(0) ATP synthase produces ATP from ADP in the presence of a proton or sodium gradient. F-type ATPases consist of two structural domains, F(1) containing the extramembraneous catalytic core and F(0) containing the membrane proton channel, linked together by a central stalk and a peripheral stalk. During catalysis, ATP synthesis in the catalytic domain of F(1) is coupled via a rotary mechanism of the central stalk subunits to proton translocation. Functionally, key component of the F(0) channel; it plays a direct role in translocation across the membrane. A homomeric c-ring of between 10-14 subunits forms the central stalk rotor element with the F(1) delta and epsilon subunits. In Alkaliphilus oremlandii (strain OhILAs) (Clostridium oremlandii (strain OhILAs)), this protein is ATP synthase subunit c.